The chain runs to 538 residues: Metal transporter Nramp5 (538 aa).

Transmembrane regions (helical) follow at residues phenylalanine 44–leucine 64, glutamate 77–alanine 97, phenylalanine 118–glutamate 138, isoleucine 140–isoleucine 160, phenylalanine 181–valine 201, isoleucine 227–leucine 247, phenylalanine 264–valine 284, serine 324–alanine 346, asparagine 365–serine 385, leucine 391–leucine 411, isoleucine 427–phenylalanine 447, and valine 467–leucine 487. A disordered region spans residues alanine 518 to arginine 538.

Belongs to the NRAMP (TC 2.A.55) family.

It is found in the membrane. Functionally, probable metal transporter. The polypeptide is Metal transporter Nramp5 (NRAMP5) (Oryza sativa subsp. japonica (Rice)).